Here is a 420-residue protein sequence, read N- to C-terminus: MDKLLIGGSKPLNGEIRISGAKNSALPILAATLLADEPVTIGNLPHLNDITTMIELLGRMGVELMIDEKMCVEVHANTIKHLTAPYELVKTMRASILVLGPMLAHFGEAEVSLPGGCAIGSRPVDLHIRGLEAMGADILVEGGYIKAKVNGRLKGAHIYMDTVTVTGTENLLMAATLADGKTVIENAAREPEVIDLAECLIAMGADIRGHGSSTIEINGVPRLHGCRYNVLPDRVETGTYLVAAAATRGRVRVKDTREDILEAVLLKLDEAGAHISTGPDWIELDMKGARPKAVSLRTAPYPAFPTDMQAQFVAMNTVAEGTGAIVETVFENRFMHVQELRRMGAKIKLEGNTAIVEGVESLTGAPVMATDLRASASLVIAGLVAEGDTLVDRIYHIDRGYECIEEKMQLLGAKIRRLPG.

Position 22 to 23 (22 to 23 (KN)) interacts with phosphoenolpyruvate. Arg-93 is a UDP-N-acetyl-alpha-D-glucosamine binding site. Cys-117 serves as the catalytic Proton donor. 2-(S-cysteinyl)pyruvic acid O-phosphothioketal is present on Cys-117. Residues 122 to 126 (RPVDL), Asp-307, and Val-329 contribute to the UDP-N-acetyl-alpha-D-glucosamine site.

This sequence belongs to the EPSP synthase family. MurA subfamily.

It localises to the cytoplasm. It carries out the reaction phosphoenolpyruvate + UDP-N-acetyl-alpha-D-glucosamine = UDP-N-acetyl-3-O-(1-carboxyvinyl)-alpha-D-glucosamine + phosphate. The protein operates within cell wall biogenesis; peptidoglycan biosynthesis. Cell wall formation. Adds enolpyruvyl to UDP-N-acetylglucosamine. This is UDP-N-acetylglucosamine 1-carboxyvinyltransferase from Hahella chejuensis (strain KCTC 2396).